The sequence spans 551 residues: Crossover junction endonuclease EME1B (551 aa).

Disordered regions lie at residues 1–55 (MNDH…PIFV) and 187–239 (TTLP…RLEK). A compositionally biased stretch (polar residues) spans 37–51 (SDPTPQKQPPESSFT). The segment covering 202 to 239 (SKEDKTSAMEEKKLRKEQERLEKAASKAEEAERKRLEK) has biased composition (basic and acidic residues). Residues 203–253 (KEDKTSAMEEKKLRKEQERLEKAASKAEEAERKRLEKEKKKWEKGKLALKS) are a coiled coil. The region spanning 287–484 (NPIERSIVWT…PSMKSLLKVY (198 aa)) is the ERCC4 domain.

It belongs to the EME1/MMS4 family. As to quaternary structure, forms a heterodimer with MUS81. It depends on Mg(2+) as a cofactor. Ca(2+) is required as a cofactor.

Its subcellular location is the nucleus. Functionally, interacts with MUS81 to form a DNA structure-specific endonuclease with substrate preference for branched DNA structures with a 5'-end at the branch nick. Typical substrates include 3'-flap structures, D-loops, replication forks, nicked Holliday junctions and also intact Holliday junctions with a reduced efficiency. May be required in mitosis for the processing of stalled or collapsed replication fork intermediates. Plays a role in DNA repair and in genotoxic stress-induced homologous recombination (HR) in somatic cells. Mediates a subset of meiotic recombination events that are insensitive to crossover interference. In Arabidopsis thaliana (Mouse-ear cress), this protein is Crossover junction endonuclease EME1B (EME1B).